The following is a 447-amino-acid chain: UDP-N-acetylmuramate--L-alanine ligase (447 aa).

ATP is bound at residue 108 to 114; it reads GSHGKTS.

It belongs to the MurCDEF family.

The protein localises to the cytoplasm. It catalyses the reaction UDP-N-acetyl-alpha-D-muramate + L-alanine + ATP = UDP-N-acetyl-alpha-D-muramoyl-L-alanine + ADP + phosphate + H(+). It functions in the pathway cell wall biogenesis; peptidoglycan biosynthesis. In terms of biological role, cell wall formation. The protein is UDP-N-acetylmuramate--L-alanine ligase of Listeria welshimeri serovar 6b (strain ATCC 35897 / DSM 20650 / CCUG 15529 / CIP 8149 / NCTC 11857 / SLCC 5334 / V8).